A 520-amino-acid chain; its full sequence is Protein root UVB sensitive 4 (520 aa).

2 consecutive transmembrane segments (helical) span residues 275-295 (IQTV…NMLF) and 301-321 (LQAC…LLGI).

The protein belongs to the RUS1 family.

It localises to the membrane. In Arabidopsis thaliana (Mouse-ear cress), this protein is Protein root UVB sensitive 4.